Reading from the N-terminus, the 130-residue chain is Follitropin subunit beta (130 aa).

Positions 1–20 (MMKLIQLCILFWCWRAICCH) are cleaved as a signal peptide. 6 cysteine pairs are disulfide-bonded: Cys-22/Cys-70, Cys-36/Cys-85, Cys-39/Cys-123, Cys-47/Cys-101, Cys-51/Cys-103, and Cys-106/Cys-113. N-linked (GlcNAc...) asparagine glycosylation is found at Asn-26 and Asn-43.

It belongs to the glycoprotein hormones subunit beta family. In terms of assembly, heterodimer. The active follitropin is a heterodimer composed of an alpha chain/CGA shared with other hormones and a unique beta chain/FSHB shown here.

It localises to the secreted. Its function is as follows. Together with the alpha chain CGA constitutes follitropin, the follicle-stimulating hormone, and provides its biological specificity to the hormone heterodimer. Binds FSHR, a G protein-coupled receptor, on target cells to activate downstream signaling pathways. Follitropin is involved in follicle development and spermatogenesis in reproductive organs. This Mus musculus (Mouse) protein is Follitropin subunit beta (Fshb).